Consider the following 132-residue polypeptide: Small ribosomal subunit protein uS8 (132 aa).

It belongs to the universal ribosomal protein uS8 family. In terms of assembly, part of the 30S ribosomal subunit. Contacts proteins S5 and S12.

In terms of biological role, one of the primary rRNA binding proteins, it binds directly to 16S rRNA central domain where it helps coordinate assembly of the platform of the 30S subunit. In Stenotrophomonas maltophilia (strain K279a), this protein is Small ribosomal subunit protein uS8.